Consider the following 152-residue polypeptide: UPF0266 membrane protein PM0830 (152 aa).

A run of 3 helical transmembrane segments spans residues 1-21 (MMII…YAFY), 45-65 (KDAL…YTNL), and 66-86 (SSAT…AAFI).

It belongs to the UPF0266 family.

It localises to the cell inner membrane. The chain is UPF0266 membrane protein PM0830 from Pasteurella multocida (strain Pm70).